A 433-amino-acid chain; its full sequence is Serine hydroxymethyltransferase (433 aa).

121–123 lines the (6S)-5,6,7,8-tetrahydrofolate pocket; sequence AHV. K227 is modified (N6-(pyridoxal phosphate)lysine). E243 contributes to the (6S)-5,6,7,8-tetrahydrofolate binding site.

This sequence belongs to the SHMT family. As to quaternary structure, homodimer. The cofactor is pyridoxal 5'-phosphate.

It is found in the cytoplasm. Its pathway is amino-acid biosynthesis; glycine biosynthesis; glycine from L-serine: step 1/1. In terms of biological role, catalyzes the reversible interconversion of serine and glycine with a modified folate serving as the one-carbon carrier. Also exhibits a pteridine-independent aldolase activity toward beta-hydroxyamino acids, producing glycine and aldehydes, via a retro-aldol mechanism. The protein is Serine hydroxymethyltransferase of Saccharolobus islandicus (strain M.14.25 / Kamchatka #1) (Sulfolobus islandicus).